The sequence spans 281 residues: Acetyl-coenzyme A carboxylase carboxyl transferase subunit beta (281 aa).

The CoA carboxyltransferase N-terminal domain occupies 23 to 281 (LWSKCEDCGA…KTLAMMRVEG (259 aa)). C27, C30, C46, and C49 together coordinate Zn(2+). The C4-type zinc finger occupies 27-49 (CEDCGAMLHRRQLEENLNTCNEC).

Belongs to the AccD/PCCB family. Acetyl-CoA carboxylase is a heterohexamer composed of biotin carboxyl carrier protein (AccB), biotin carboxylase (AccC) and two subunits each of ACCase subunit alpha (AccA) and ACCase subunit beta (AccD). It depends on Zn(2+) as a cofactor.

It is found in the cytoplasm. It catalyses the reaction N(6)-carboxybiotinyl-L-lysyl-[protein] + acetyl-CoA = N(6)-biotinyl-L-lysyl-[protein] + malonyl-CoA. Its pathway is lipid metabolism; malonyl-CoA biosynthesis; malonyl-CoA from acetyl-CoA: step 1/1. Its function is as follows. Component of the acetyl coenzyme A carboxylase (ACC) complex. Biotin carboxylase (BC) catalyzes the carboxylation of biotin on its carrier protein (BCCP) and then the CO(2) group is transferred by the transcarboxylase to acetyl-CoA to form malonyl-CoA. In Chlorobium luteolum (strain DSM 273 / BCRC 81028 / 2530) (Pelodictyon luteolum), this protein is Acetyl-coenzyme A carboxylase carboxyl transferase subunit beta.